A 108-amino-acid chain; its full sequence is uncharacterized protein (108 aa).

2 helical membrane passes run Tyr32–Ile52 and Ser68–Gly88.

The protein resides in the membrane. This is an uncharacterized protein from Saccharomyces cerevisiae (strain ATCC 204508 / S288c) (Baker's yeast).